The sequence spans 307 residues: Taste receptor type 2 member 41 (307 aa).

At 1–7 (MQAALMA) the chain is on the extracellular side. The chain crosses the membrane as a helical span at residues 8 to 28 (FFMLLFSLLSLLGIAANGFIV). Topologically, residues 29 to 40 (LVLGREWLRYGR) are cytoplasmic. A helical transmembrane segment spans residues 41–61 (LLPLDMILISLGASRXCLQLV). Residues 62-88 (GTVHNFYYSARKVEYSGGLGRQFFHLH) lie on the Extracellular side of the membrane. The helical transmembrane segment at 89-109 (WHFLNSATFWFCSWLSVLFCV) threads the bilayer. The Cytoplasmic portion of the chain corresponds to 110–129 (KIANITHPTFLWLKWRFPGW). The chain crosses the membrane as a helical span at residues 130-150 (VPWLLLGSVLISFIITLLFFW). The Extracellular segment spans residues 151–183 (VNYPVYQELLIRKFSGNMTYKWNTRIETYYFPS). N-linked (GlcNAc...) asparagine glycosylation is present at asparagine 167. The helical transmembrane segment at 184–204 (LKLVIWSIPFSVFLVSIMLLI) threads the bilayer. Over 205-234 (NSLRRHTQRMQHNGHSLQDPSTQAHTRALK) the chain is Cytoplasmic. A helical membrane pass occupies residues 235–255 (SLISFLFLYALSFLSLIIDAT). At 256-264 (KFISMQNDF) the chain is on the extracellular side. A helical membrane pass occupies residues 265 to 285 (YWPWQIAVYLCISVHPFILIF). Residues 286–307 (SNLKLRSMFWQVLLLARGFWVA) are Cytoplasmic-facing.

It belongs to the G-protein coupled receptor T2R family.

It is found in the membrane. Its function is as follows. Receptor that may play a role in the perception of bitterness and is gustducin-linked. May play a role in sensing the chemical composition of the gastrointestinal content. The activity of this receptor may stimulate alpha gustducin, mediate PLC-beta-2 activation and lead to the gating of TRPM5. This Gorilla gorilla gorilla (Western lowland gorilla) protein is Taste receptor type 2 member 41 (TAS2R41).